Reading from the N-terminus, the 194-residue chain is MSLVPVVVEQTNRGERSYDIYSRLLKDRIVMLSEEVNDVTASLIVAQLLFLEAENPDKDIYFYINSPGGSITAGMAIYDTMQYIKSDVSTICIGMAASMGAFLLAAGEKGKRFALPNSEIMIHQPLGGFQGQATDIGIHADRILRIKKKLNAIISERTGQSIEKVEKDTERDNFMTAEEAKEYGLIDEVFTKKK.

Ser98 serves as the catalytic Nucleophile. Residue His123 is part of the active site.

It belongs to the peptidase S14 family. In terms of assembly, fourteen ClpP subunits assemble into 2 heptameric rings which stack back to back to give a disk-like structure with a central cavity, resembling the structure of eukaryotic proteasomes.

Its subcellular location is the cytoplasm. The catalysed reaction is Hydrolysis of proteins to small peptides in the presence of ATP and magnesium. alpha-casein is the usual test substrate. In the absence of ATP, only oligopeptides shorter than five residues are hydrolyzed (such as succinyl-Leu-Tyr-|-NHMec, and Leu-Tyr-Leu-|-Tyr-Trp, in which cleavage of the -Tyr-|-Leu- and -Tyr-|-Trp bonds also occurs).. Functionally, cleaves peptides in various proteins in a process that requires ATP hydrolysis. Has a chymotrypsin-like activity. Plays a major role in the degradation of misfolded proteins. The polypeptide is ATP-dependent Clp protease proteolytic subunit (Clostridium kluyveri (strain NBRC 12016)).